The chain runs to 756 residues: 5-methyltetrahydropteroyltriglutamate--homocysteine methyltransferase (756 aa).

Residues 16 to 19 and K116 contribute to the 5-methyltetrahydropteroyltri-L-glutamate site; that span reads RELK. L-homocysteine-binding positions include 435–437 and E488; that span reads IGS. L-methionine is bound by residues 435-437 and E488; that span reads IGS. 5-methyltetrahydropteroyltri-L-glutamate-binding positions include 519-520 and W565; that span reads RC. D603 contacts L-homocysteine. D603 is an L-methionine binding site. E609 serves as a coordination point for 5-methyltetrahydropteroyltri-L-glutamate. Zn(2+) is bound by residues H645, C647, and E669. The active-site Proton donor is the H698. C730 contacts Zn(2+).

The protein belongs to the vitamin-B12 independent methionine synthase family. Zn(2+) serves as cofactor.

It carries out the reaction 5-methyltetrahydropteroyltri-L-glutamate + L-homocysteine = tetrahydropteroyltri-L-glutamate + L-methionine. The protein operates within amino-acid biosynthesis; L-methionine biosynthesis via de novo pathway; L-methionine from L-homocysteine (MetE route): step 1/1. Catalyzes the transfer of a methyl group from 5-methyltetrahydrofolate to homocysteine resulting in methionine formation. This Marinobacter nauticus (strain ATCC 700491 / DSM 11845 / VT8) (Marinobacter aquaeolei) protein is 5-methyltetrahydropteroyltriglutamate--homocysteine methyltransferase.